We begin with the raw amino-acid sequence, 929 residues long: uncharacterized protein (929 aa).

Residues Met-1–Ser-257 form a disordered region. Residues Lys-23–Glu-34 are compositionally biased toward basic and acidic residues. 5 stretches are compositionally biased toward acidic residues: residues Glu-35–Glu-50, Ser-59–Asp-75, Leu-107–Val-117, Asp-133–Leu-144, and Ser-188–Asn-220. Ser-251, Ser-555, and Ser-557 each carry phosphoserine. The disordered stretch occupies residues Asp-602–Lys-729. Positions Gln-605 to Asp-619 are enriched in acidic residues. Residues Asn-670 to Ala-681 are compositionally biased toward basic and acidic residues. The segment covering Glu-696–Ala-711 has biased composition (polar residues). Basic and acidic residues predominate over residues Lys-712 to Lys-729. Phosphoserine occurs at positions 758, 760, and 764. Residues Lys-805 to Ser-820 are compositionally biased toward basic and acidic residues. The disordered stretch occupies residues Lys-805 to Lys-843. Over residues Lys-833 to Lys-843 the composition is skewed to basic residues.

It to yeast YML093w.

It localises to the nucleus. It is found in the nucleolus. This is an uncharacterized protein from Schizosaccharomyces pombe (strain 972 / ATCC 24843) (Fission yeast).